The primary structure comprises 766 residues: Deoxynucleotidyltransferase terminal-interacting protein 2 (766 aa).

Residues 1–99 (MVVTRSARPQ…DCSSVPEVQD (99 aa)) are disordered. Composition is skewed to polar residues over residues 13–28 (NEAT…NSAV) and 42–56 (SPDN…TTPE). Residue T127 is modified to Phosphothreonine. 3 positions are modified to phosphoserine: S139, S143, and S146. Residues 155–175 (TEITTRRSKAKSQREPKQESH) are disordered. Residues 166–175 (SQREPKQESH) show a composition bias toward basic and acidic residues. Residues S180 and S190 each carry the phosphoserine modification. K217 participates in a covalent cross-link: Glycyl lysine isopeptide (Lys-Gly) (interchain with G-Cter in SUMO2). At T229 the chain carries Phosphothreonine. 3 positions are modified to phosphoserine: S236, S248, and S250. K254 is covalently cross-linked (Glycyl lysine isopeptide (Lys-Gly) (interchain with G-Cter in SUMO2)). The residue at position 258 (S258) is a Phosphoserine. A Glycyl lysine isopeptide (Lys-Gly) (interchain with G-Cter in SUMO2) cross-link involves residue K327. S334 bears the Phosphoserine mark. Disordered stretches follow at residues 345-367 (VSQR…LNHE), 390-450 (KNAI…KDDS), and 520-557 (KAGE…DEDN). K394 participates in a covalent cross-link: Glycyl lysine isopeptide (Lys-Gly) (interchain with G-Cter in SUMO2). Residues 421–434 (DMSKEKEVDSESDT) show a composition bias toward basic and acidic residues. The span at 435-444 (KPSNLEFNTT) shows a compositional bias: polar residues. The stretch at 515-552 (LDEEDKAGEVATEEEEEEEEEESEEELSDHDRNKDNEF) forms a coiled coil. The segment covering 520-542 (KAGEVATEEEEEEEEEESEEELS) has biased composition (acidic residues). A tdBR region; mediates interaction with DNTT region spans residues 558–615 (LLSNTKSKLLKLMSSSIDTGLNIKELGGLYINFNADKVQLNKRTLTQMKEKRKDELLQ). Residues K568, K594, and K616 each participate in a glycyl lysine isopeptide (Lys-Gly) (interchain with G-Cter in SUMO2) cross-link. T620 carries the post-translational modification Phosphothreonine. Residues K636, K659, K668, K696, and K741 each participate in a glycyl lysine isopeptide (Lys-Gly) (interchain with G-Cter in SUMO2) cross-link.

Forms a ternary complex with DNTT and core histone; interaction with PCNA releases DNTT and H2A/H2B histones from this ternary complex. Interacts with ESR1, ESR2, PPARG and RXRA. Part of the small subunit (SSU) processome, composed of more than 70 proteins and the RNA chaperone small nucleolar RNA (snoRNA) U3.

It localises to the nucleus. The protein localises to the nucleolus. In terms of biological role, regulates the transcriptional activity of DNTT and ESR1. May function as a chromatin remodeling protein. Part of the small subunit (SSU) processome, first precursor of the small eukaryotic ribosomal subunit. During the assembly of the SSU processome in the nucleolus, many ribosome biogenesis factors, an RNA chaperone and ribosomal proteins associate with the nascent pre-rRNA and work in concert to generate RNA folding, modifications, rearrangements and cleavage as well as targeted degradation of pre-ribosomal RNA by the RNA exosome. In Bos taurus (Bovine), this protein is Deoxynucleotidyltransferase terminal-interacting protein 2 (DNTTIP2).